The chain runs to 896 residues: Alanine--tRNA ligase (896 aa).

Zn(2+) is bound by residues His-580, His-584, Cys-683, and His-687.

This sequence belongs to the class-II aminoacyl-tRNA synthetase family. It depends on Zn(2+) as a cofactor.

The protein resides in the cytoplasm. It catalyses the reaction tRNA(Ala) + L-alanine + ATP = L-alanyl-tRNA(Ala) + AMP + diphosphate. Functionally, catalyzes the attachment of alanine to tRNA(Ala) in a two-step reaction: alanine is first activated by ATP to form Ala-AMP and then transferred to the acceptor end of tRNA(Ala). Also edits incorrectly charged Ser-tRNA(Ala) and Gly-tRNA(Ala) via its editing domain. This chain is Alanine--tRNA ligase, found in Mycolicibacterium smegmatis (strain ATCC 700084 / mc(2)155) (Mycobacterium smegmatis).